The primary structure comprises 352 residues: UDP-N-acetylglucosamine--N-acetylmuramyl-(pentapeptide) pyrophosphoryl-undecaprenol N-acetylglucosamine transferase (352 aa).

UDP-N-acetyl-alpha-D-glucosamine contacts are provided by residues 11-13 (TGG), Asn120, Arg161, Ser188, and Gln286.

It belongs to the glycosyltransferase 28 family. MurG subfamily.

It localises to the cell inner membrane. The catalysed reaction is di-trans,octa-cis-undecaprenyl diphospho-N-acetyl-alpha-D-muramoyl-L-alanyl-D-glutamyl-meso-2,6-diaminopimeloyl-D-alanyl-D-alanine + UDP-N-acetyl-alpha-D-glucosamine = di-trans,octa-cis-undecaprenyl diphospho-[N-acetyl-alpha-D-glucosaminyl-(1-&gt;4)]-N-acetyl-alpha-D-muramoyl-L-alanyl-D-glutamyl-meso-2,6-diaminopimeloyl-D-alanyl-D-alanine + UDP + H(+). Its pathway is cell wall biogenesis; peptidoglycan biosynthesis. Functionally, cell wall formation. Catalyzes the transfer of a GlcNAc subunit on undecaprenyl-pyrophosphoryl-MurNAc-pentapeptide (lipid intermediate I) to form undecaprenyl-pyrophosphoryl-MurNAc-(pentapeptide)GlcNAc (lipid intermediate II). The protein is UDP-N-acetylglucosamine--N-acetylmuramyl-(pentapeptide) pyrophosphoryl-undecaprenol N-acetylglucosamine transferase of Prochlorococcus marinus (strain NATL1A).